The primary structure comprises 389 residues: Chalcone synthase 1 (389 aa).

Cys164 is a catalytic residue.

This sequence belongs to the thiolase-like superfamily. Chalcone/stilbene synthases family.

It carries out the reaction (E)-4-coumaroyl-CoA + 3 malonyl-CoA + 3 H(+) = 2',4,4',6'-tetrahydroxychalcone + 3 CO2 + 4 CoA. It participates in secondary metabolite biosynthesis; flavonoid biosynthesis. In terms of biological role, the primary product of this enzyme is 4,2',4',6'-tetrahydroxychalcone (also termed naringenin-chalcone or chalcone) which can under specific conditions spontaneously isomerize into naringenin. The sequence is that of Chalcone synthase 1 (CHS1) from Camellia sinensis (Tea plant).